We begin with the raw amino-acid sequence, 563 residues long: ATP-dependent RNA helicase DeaD (563 aa).

Residues 13–41 carry the Q motif motif; it reads ATFADLQIHPRVLRAIGDVGYESPTAIQA. One can recognise a Helicase ATP-binding domain in the interval 44–215; it reads IPALMAGSDV…AKYLHDPFEV (172 aa). 57–64 contacts ATP; the sequence is AQTGTGKT. The short motif at 163 to 166 is the DEAD box element; the sequence is DEAD. Positions 226 to 385 constitute a Helicase C-terminal domain; it reads NISQSYIQVA…AQLPTVEDVN (160 aa). Disordered regions lie at residues 441–470 and 543–563; these read LMAPDPPLSRRNRDQRRDRPQRPKRRPDLT and YRPPDAARRHNGGKPRRKHVG. A compositionally biased stretch (basic and acidic residues) spans 451 to 461; that stretch reads RNRDQRRDRPQ. The segment covering 551-563 has biased composition (basic residues); it reads RHNGGKPRRKHVG.

It belongs to the DEAD box helicase family. DeaD/CsdA subfamily.

The protein localises to the cytoplasm. It catalyses the reaction ATP + H2O = ADP + phosphate + H(+). In terms of biological role, DEAD-box RNA helicase involved in various cellular processes at low temperature, including ribosome biogenesis, mRNA degradation and translation initiation. This chain is ATP-dependent RNA helicase DeaD, found in Mycobacterium tuberculosis (strain CDC 1551 / Oshkosh).